Here is a 159-residue protein sequence, read N- to C-terminus: MIRIGQGFDVHQLTEGRPLLLGGVHIPHPKGLLGHSDADVLLHTITDAALGAIGAGDLGKHFPDTDEAFKDADSKHLLSQAWQLVKNAGYTLGNVDCTVMAQKPKLAPYIEAMRKQIAELLETDVANVSVKATTTETLGFVGREEGIAAQAVILLQKAE.

Residues aspartate 9 and histidine 11 each contribute to the a divalent metal cation site. 4-CDP-2-C-methyl-D-erythritol 2-phosphate is bound by residues 9–11 and 35–36; these read DVH and HS. Histidine 43 provides a ligand contact to a divalent metal cation. Residues 57–59, 62–66, 133–136, phenylalanine 140, and arginine 143 contribute to the 4-CDP-2-C-methyl-D-erythritol 2-phosphate site; these read DLG, FPDTD, and TTTE.

It belongs to the IspF family. As to quaternary structure, homotrimer. Requires a divalent metal cation as cofactor.

It catalyses the reaction 4-CDP-2-C-methyl-D-erythritol 2-phosphate = 2-C-methyl-D-erythritol 2,4-cyclic diphosphate + CMP. Its pathway is isoprenoid biosynthesis; isopentenyl diphosphate biosynthesis via DXP pathway; isopentenyl diphosphate from 1-deoxy-D-xylulose 5-phosphate: step 4/6. Its function is as follows. Involved in the biosynthesis of isopentenyl diphosphate (IPP) and dimethylallyl diphosphate (DMAPP), two major building blocks of isoprenoid compounds. Catalyzes the conversion of 4-diphosphocytidyl-2-C-methyl-D-erythritol 2-phosphate (CDP-ME2P) to 2-C-methyl-D-erythritol 2,4-cyclodiphosphate (ME-CPP) with a corresponding release of cytidine 5-monophosphate (CMP). This chain is 2-C-methyl-D-erythritol 2,4-cyclodiphosphate synthase, found in Shouchella clausii (strain KSM-K16) (Alkalihalobacillus clausii).